Reading from the N-terminus, the 186-residue chain is Small ribosomal subunit protein uS7 (186 aa).

Belongs to the universal ribosomal protein uS7 family. Part of the 30S ribosomal subunit.

Functionally, one of the primary rRNA binding proteins, it binds directly to 16S rRNA where it nucleates assembly of the head domain of the 30S subunit. Is located at the subunit interface close to the decoding center. The chain is Small ribosomal subunit protein uS7 from Methanococcoides burtonii (strain DSM 6242 / NBRC 107633 / OCM 468 / ACE-M).